A 243-amino-acid chain; its full sequence is Tryptophan synthase alpha chain (243 aa).

Active-site proton acceptor residues include Glu-31 and Asp-42.

The protein belongs to the TrpA family. As to quaternary structure, tetramer of two alpha and two beta chains.

It carries out the reaction (1S,2R)-1-C-(indol-3-yl)glycerol 3-phosphate + L-serine = D-glyceraldehyde 3-phosphate + L-tryptophan + H2O. It participates in amino-acid biosynthesis; L-tryptophan biosynthesis; L-tryptophan from chorismate: step 5/5. The alpha subunit is responsible for the aldol cleavage of indoleglycerol phosphate to indole and glyceraldehyde 3-phosphate. The chain is Tryptophan synthase alpha chain from Staphylococcus haemolyticus (strain JCSC1435).